A 552-amino-acid chain; its full sequence is Terpene synthase 5 (552 aa).

The Mg(2+) site is built by D307, D311, and E457. The DDXXD motif signature appears at 307–311; the sequence is DDTYD.

The protein belongs to the terpene synthase family. It depends on Mg(2+) as a cofactor.

Catalyzes the cyclization of farnesyl diphosphate to multiple sesquiterpenes, such as olefins and sesquiterpene alcohols. This Ricinus communis (Castor bean) protein is Terpene synthase 5 (TPS5).